Consider the following 261-residue polypeptide: Hemin import ATP-binding protein HmuV (261 aa).

Positions 5–241 constitute an ABC transporter domain; it reads LTANAASFAI…DLLARVFDVD (237 aa). 37–44 contacts ATP; sequence GPNGAGKS.

Belongs to the ABC transporter superfamily. Heme (hemin) importer (TC 3.A.1.14.5) family. In terms of assembly, the complex is composed of two ATP-binding proteins (HmuV), two transmembrane proteins (HmuU) and a solute-binding protein (HmuT).

The protein resides in the cell inner membrane. Its function is as follows. Part of the ABC transporter complex HmuTUV involved in hemin import. Responsible for energy coupling to the transport system. The chain is Hemin import ATP-binding protein HmuV from Rhodopseudomonas palustris (strain BisB5).